A 592-amino-acid chain; its full sequence is V-type ATP synthase alpha chain (592 aa).

An ATP-binding site is contributed by 232-239 (GPFGAGKT).

It belongs to the ATPase alpha/beta chains family.

The catalysed reaction is ATP + H2O + 4 H(+)(in) = ADP + phosphate + 5 H(+)(out). Functionally, produces ATP from ADP in the presence of a proton gradient across the membrane. The V-type alpha chain is a catalytic subunit. The polypeptide is V-type ATP synthase alpha chain (Clostridium botulinum (strain Alaska E43 / Type E3)).